Here is a 508-residue protein sequence, read N- to C-terminus: Lysine--tRNA ligase (508 aa).

Residues Glu-418 and Glu-425 each contribute to the Mg(2+) site.

It belongs to the class-II aminoacyl-tRNA synthetase family. Homodimer. Mg(2+) serves as cofactor.

It is found in the cytoplasm. It carries out the reaction tRNA(Lys) + L-lysine + ATP = L-lysyl-tRNA(Lys) + AMP + diphosphate. The protein is Lysine--tRNA ligase of Burkholderia ambifaria (strain MC40-6).